Reading from the N-terminus, the 164-residue chain is 4-hydroxy-4-methyl-2-oxoglutarate aldolase (164 aa).

Residues 74–77 (GGNL) and Arg-96 each bind substrate. Asp-97 is a binding site for a divalent metal cation.

Belongs to the class II aldolase/RraA-like family. Homotrimer. Ni(2+) serves as cofactor. It depends on Co(2+) as a cofactor. The cofactor is Zn(2+).

The catalysed reaction is 4-hydroxy-4-methyl-2-oxoglutarate = 2 pyruvate. The enzyme catalyses oxaloacetate + H(+) = pyruvate + CO2. Its activity is regulated as follows. Competitively inhibited by oxalate, a pyruvate enolate analog. Functionally, catalyzes the aldol cleavage of 4-hydroxy-4-methyl-2-oxoglutarate (HMG) into 2 molecules of pyruvate. Also contains a secondary oxaloacetate (OAA) decarboxylase activity due to the common pyruvate enolate transition state formed following C-C bond cleavage in the retro-aldol and decarboxylation reactions. In Thermus thermophilus (strain ATCC 27634 / DSM 579 / HB8), this protein is 4-hydroxy-4-methyl-2-oxoglutarate aldolase.